The primary structure comprises 422 residues: Tryptophan synthase beta chain (422 aa).

K111 is modified (N6-(pyridoxal phosphate)lysine).

The protein belongs to the TrpB family. Tetramer of two alpha and two beta chains. Requires pyridoxal 5'-phosphate as cofactor.

The enzyme catalyses (1S,2R)-1-C-(indol-3-yl)glycerol 3-phosphate + L-serine = D-glyceraldehyde 3-phosphate + L-tryptophan + H2O. It functions in the pathway amino-acid biosynthesis; L-tryptophan biosynthesis; L-tryptophan from chorismate: step 5/5. The beta subunit is responsible for the synthesis of L-tryptophan from indole and L-serine. This is Tryptophan synthase beta chain from Pseudothermotoga lettingae (strain ATCC BAA-301 / DSM 14385 / NBRC 107922 / TMO) (Thermotoga lettingae).